The following is a 64-amino-acid chain: Large ribosomal subunit protein bL35 (64 aa).

This sequence belongs to the bacterial ribosomal protein bL35 family.

In Vibrio metschnikovii, this protein is Large ribosomal subunit protein bL35.